Here is a 539-residue protein sequence, read N- to C-terminus: Putative cysteine ligase BshC (539 aa).

The stretch at 455–475 forms a coiled coil; it reads LQKNAAFIQDQLLFLERTVTK.

It belongs to the BshC family.

In terms of biological role, involved in bacillithiol (BSH) biosynthesis. May catalyze the last step of the pathway, the addition of cysteine to glucosamine malate (GlcN-Mal) to generate BSH. The protein is Putative cysteine ligase BshC of Bacillus velezensis (strain DSM 23117 / BGSC 10A6 / LMG 26770 / FZB42) (Bacillus amyloliquefaciens subsp. plantarum).